The primary structure comprises 292 residues: 4-hydroxy-tetrahydrodipicolinate synthase (292 aa).

Threonine 45 serves as a coordination point for pyruvate. Tyrosine 133 serves as the catalytic Proton donor/acceptor. Lysine 161 (schiff-base intermediate with substrate) is an active-site residue. Isoleucine 203 contributes to the pyruvate binding site.

This sequence belongs to the DapA family. In terms of assembly, homodimer.

The protein localises to the cytoplasm. It catalyses the reaction L-aspartate 4-semialdehyde + pyruvate = (2S,4S)-4-hydroxy-2,3,4,5-tetrahydrodipicolinate + H2O + H(+). It participates in amino-acid biosynthesis; L-lysine biosynthesis via DAP pathway; (S)-tetrahydrodipicolinate from L-aspartate: step 3/4. Catalyzes the condensation of (S)-aspartate-beta-semialdehyde [(S)-ASA] and pyruvate to 4-hydroxy-tetrahydrodipicolinate (HTPA). The polypeptide is 4-hydroxy-tetrahydrodipicolinate synthase (Pseudomonas putida (strain W619)).